Here is a 218-residue protein sequence, read N- to C-terminus: NAD(P)H-hydrate epimerase (218 aa).

Residues 9 to 215 (MKKIDQYAID…DIGIPQKAIR (207 aa)) form the YjeF N-terminal domain. 55–59 (NNGAD) serves as a coordination point for (6S)-NADPHX. K(+)-binding residues include Asn-56 and Asp-127. (6S)-NADPHX-binding positions include 131-137 (GTGLNRT) and Asp-160. A K(+)-binding site is contributed by Ser-163.

Belongs to the NnrE/AIBP family. K(+) serves as cofactor.

It catalyses the reaction (6R)-NADHX = (6S)-NADHX. It carries out the reaction (6R)-NADPHX = (6S)-NADPHX. Functionally, catalyzes the epimerization of the S- and R-forms of NAD(P)HX, a damaged form of NAD(P)H that is a result of enzymatic or heat-dependent hydration. This is a prerequisite for the S-specific NAD(P)H-hydrate dehydratase to allow the repair of both epimers of NAD(P)HX. The sequence is that of NAD(P)H-hydrate epimerase from Anaerococcus prevotii (strain ATCC 9321 / DSM 20548 / JCM 6508 / NCTC 11806 / PC1) (Peptostreptococcus prevotii).